A 511-amino-acid polypeptide reads, in one-letter code: GMP synthase [glutamine-hydrolyzing] (511 aa).

Residues 3–193 (KILILDFGGQ…VYSICDVAGD (191 aa)) enclose the Glutamine amidotransferase type-1 domain. Cysteine 80 serves as the catalytic Nucleophile. Active-site residues include histidine 167 and glutamate 169. A GMPS ATP-PPase domain is found at 194-384 (WEPKNIKLEK…LDIPYQNVYR (191 aa)). 221 to 227 (SGGVDSL) is an ATP binding site.

In terms of assembly, homodimer.

The catalysed reaction is XMP + L-glutamine + ATP + H2O = GMP + L-glutamate + AMP + diphosphate + 2 H(+). The protein operates within purine metabolism; GMP biosynthesis; GMP from XMP (L-Gln route): step 1/1. In terms of biological role, catalyzes the synthesis of GMP from XMP. The sequence is that of GMP synthase [glutamine-hydrolyzing] from Malacoplasma penetrans (strain HF-2) (Mycoplasma penetrans).